Here is a 232-residue protein sequence, read N- to C-terminus: Large ribosomal subunit protein uL1 (232 aa).

The protein belongs to the universal ribosomal protein uL1 family. As to quaternary structure, part of the 50S ribosomal subunit.

Binds directly to 23S rRNA. The L1 stalk is quite mobile in the ribosome, and is involved in E site tRNA release. In terms of biological role, protein L1 is also a translational repressor protein, it controls the translation of the L11 operon by binding to its mRNA. This chain is Large ribosomal subunit protein uL1, found in Jannaschia sp. (strain CCS1).